We begin with the raw amino-acid sequence, 1287 residues long: Pullulanase A (1287 aa).

An N-terminal signal peptide occupies residues 1–44 (MRKTPSHTEKKMVYSIRSLKNGTGSVLIGASLVLLAMATPTISS). Residues 42 to 139 (ISSDESTPTT…VTTETKAEEP (98 aa)) are disordered. Positions 48–61 (TPTTNEPNNRNTTT) are enriched in low complexity. Polar residues predominate over residues 79-90 (DISSPGNANASL). Composition is skewed to low complexity over residues 99 to 113 (TEPTTPAASPADPAP) and 122 to 133 (EPTTSTSPVTTE). Substrate is bound by residues 163–165 (WTW), Trp175, Asp221, 270–272 (WYW), Trp283, Lys325, and Asn330. The Ca(2+) site is built by Ser668 and Tyr670. Substrate contacts are provided by residues 674 to 675 (YD) and Phe750. Catalysis depends on Asp785, which acts as the Nucleophile. The Proton donor role is filled by Glu814. Trp816 lines the substrate pocket. Ca(2+) contacts are provided by Met835, Thr838, and Asp839. Residues Asp846, Arg849, and Tyr856 each coordinate substrate. 2 residues coordinate Ca(2+): Asp889 and Asp893. Residues Asn903, Lys976, and 996-998 (DSY) contribute to the substrate site. Asp999 contributes to the Ca(2+) binding site. Residues 1147 to 1255 (VSQNGTSHES…TPDRQAELPN (109 aa)) are disordered. Residues 1156 to 1203 (STAEEKPDSTPSKPEHQNEASHPAHQDPAPEARPDSTKPDAKVADAEN) are compositionally biased toward basic and acidic residues. Low complexity predominate over residues 1212 to 1225 (SQAEQPAQEAQASS). Residues 1228–1239 (EAVRKESVENSS) are compositionally biased toward basic and acidic residues. The LPXTG sorting signal motif lies at 1253-1257 (LPNTG). The residue at position 1256 (Thr1256) is a Pentaglycyl murein peptidoglycan amidated threonine. Residues 1257–1287 (GIKNENKLLFAGISLLALLGLGFLLKNKKEN) constitute a propeptide, removed by sortase.

The protein belongs to the glycosyl hydrolase 13 family.

It is found in the secreted. The protein localises to the cell wall. The protein resides in the cell surface. The enzyme catalyses Hydrolysis of (1-&gt;6)-alpha-D-glucosidic linkages in pullulan, amylopectin and glycogen, and in the alpha- and beta-limit dextrins of amylopectin and glycogen.. Its activity is regulated as follows. Inhibited by 4-O-alpha-D-glucopyranosylmoranoline (G1M). Its function is as follows. Virulence factor. Involved in the degradation of glycogen of the mammalian host cells. Hydrolyzes the alpha-1,6-branchpoints of glycogen. Hydrolyzes pullulan. Does not hydrolyze dextran. Binds to mouse lung alveolar type II cells that are rich in glycogen stores. Is an alpha-glucan-specific carbohydrate-binding protein, which binds to amylose (pure alpha-(1,4)-linked glucose), amylopectin (alpha-(1,4)-linked glucose with alpha-(1,6) branch points), pullulan (linear polymer of mixed alpha-(1,4)- and alpha-(1,6)-linked glucose) and glycogen (similar to amylopectin with more frequent alpha-(1,6) branch points) in vitro. Does not bind to dextran (a linear polymer of alpha-(1,6)-linked glucose). The sequence is that of Pullulanase A from Streptococcus pneumoniae.